A 198-amino-acid polypeptide reads, in one-letter code: FMN-dependent NADH:quinone oxidoreductase (198 aa).

92–95 (MWNL) contacts FMN.

This sequence belongs to the azoreductase type 1 family. In terms of assembly, homodimer. It depends on FMN as a cofactor.

The enzyme catalyses 2 a quinone + NADH + H(+) = 2 a 1,4-benzosemiquinone + NAD(+). It carries out the reaction N,N-dimethyl-1,4-phenylenediamine + anthranilate + 2 NAD(+) = 2-(4-dimethylaminophenyl)diazenylbenzoate + 2 NADH + 2 H(+). Its function is as follows. Quinone reductase that provides resistance to thiol-specific stress caused by electrophilic quinones. Also exhibits azoreductase activity. Catalyzes the reductive cleavage of the azo bond in aromatic azo compounds to the corresponding amines. The chain is FMN-dependent NADH:quinone oxidoreductase from Clostridium beijerinckii (strain ATCC 51743 / NCIMB 8052) (Clostridium acetobutylicum).